Reading from the N-terminus, the 239-residue chain is Ribonuclease 3 (239 aa).

Positions 12 to 137 constitute an RNase III domain; sequence RAKLEGLIGH…LIAAIYLDGG (126 aa). Glutamate 50 is a Mg(2+) binding site. Residue aspartate 54 is part of the active site. The Mg(2+) site is built by aspartate 123 and glutamate 126. Glutamate 126 is an active-site residue. Positions 162–231 constitute a DRBM domain; sequence DAKTELQEWS…ATKMLEREGI (70 aa).

Belongs to the ribonuclease III family. Homodimer. Mg(2+) serves as cofactor.

The protein localises to the cytoplasm. It catalyses the reaction Endonucleolytic cleavage to 5'-phosphomonoester.. Functionally, digests double-stranded RNA. Involved in the processing of primary rRNA transcript to yield the immediate precursors to the large and small rRNAs (23S and 16S). Processes some mRNAs, and tRNAs when they are encoded in the rRNA operon. Processes pre-crRNA and tracrRNA of type II CRISPR loci if present in the organism. This is Ribonuclease 3 from Rhizobium leguminosarum bv. trifolii (strain WSM2304).